The primary structure comprises 227 residues: Spore coat protein O (227 aa).

Basic residues predominate over residues 1–10; sequence MKMSNKKRNA. The tract at residues 1-157 is disordered; sequence MKMSNKKRNA…PARKVKKPMS (157 aa). Composition is skewed to basic and acidic residues over residues 35–60, 85–100, and 108–147; these read VIKR…KQQE, EARE…EQKA, and TVEH…EKAP.

It is found in the spore coat. Has an important morphogenetic role. Involved in the assembly of at least five coat proteins, including CotB, CotG, CotS, CotSA and CotW. Required for appearance of a morphologically normal outer coat. To a large degree, CotO and CotH act at a late stage of coat assembly from within the outer coat to direct maturation of this structure. The chain is Spore coat protein O (cotO) from Bacillus subtilis (strain 168).